Consider the following 351-residue polypeptide: uncharacterized protein (351 aa).

Positions 14–69 (PRLADIAAQAQVSEATASRVLNGRPASRXSTRQRVLAALDLLGYERPTRLRRRSAG) constitute an HTH lacI-type domain. Positions 16 to 35 (LADIAAQAQVSEATASRVLN) form a DNA-binding region, H-T-H motif.

In terms of biological role, putative sugar-binding regulatory protein for the alpha-amylase gene. This is an uncharacterized protein from Streptomyces limosus (Streptomyces albidoflavus).